The sequence spans 251 residues: Coenzyme F420:L-glutamate ligase (251 aa).

GTP is bound by residues Leu9–Ile12, Ser38–Thr39, and Lys43. Residue Asp113 participates in a divalent metal cation binding. Residue Asn116 coordinates GTP. Positions 149, 150, and 207 each coordinate a divalent metal cation. Ala205–Thr212 provides a ligand contact to GTP.

This sequence belongs to the CofE family. As to quaternary structure, homodimer. The cofactor is Mg(2+). Mn(2+) is required as a cofactor. K(+) serves as cofactor.

The catalysed reaction is oxidized coenzyme F420-0 + GTP + L-glutamate = oxidized coenzyme F420-1 + GDP + phosphate + H(+). It carries out the reaction oxidized coenzyme F420-1 + GTP + L-glutamate = oxidized coenzyme F420-2 + GDP + phosphate + H(+). It participates in cofactor biosynthesis; coenzyme F420 biosynthesis. In terms of biological role, catalyzes the GTP-dependent successive addition of two or more gamma-linked L-glutamates to the L-lactyl phosphodiester of 7,8-didemethyl-8-hydroxy-5-deazariboflavin (F420-0) to form coenzyme F420-0-glutamyl-glutamate (F420-2) or polyglutamated F420 derivatives. The sequence is that of Coenzyme F420:L-glutamate ligase from Halorubrum lacusprofundi (strain ATCC 49239 / DSM 5036 / JCM 8891 / ACAM 34).